The sequence spans 199 residues: CASP-like protein 1B2 (199 aa).

Over 1–22 the chain is Cytoplasmic; it reads MALQSEEKLEVGYSSLQPKTRK. The helical transmembrane segment at 23 to 43 threads the bilayer; the sequence is WVLLMLRVLAFFATAAATVVM. The Extracellular portion of the chain corresponds to 44 to 74; the sequence is GLNKETKTLVVATVGSTPIKASLAAKFQHTP. The chain crosses the membrane as a helical span at residues 75–95; that stretch reads AFVFFVIANGLASIHNLVMIM. The Cytoplasmic segment spans residues 96–112; it reads GDLFGQKLDYKGLRLAM. The helical transmembrane segment at 113 to 133 threads the bilayer; the sequence is IAILDMMTVALVSGGVSAAAF. Over 134–163 the chain is Extracellular; that stretch reads MAELGKNGNSHARWNKICDKFETFCDHGGG. A helical transmembrane segment spans residues 164–184; that stretch reads ALIASFAGLILMLIISVMSII. Over 185 to 199 the chain is Cytoplasmic; sequence KLLIKPKPDSTIVVP.

This sequence belongs to the Casparian strip membrane proteins (CASP) family. As to quaternary structure, homodimer and heterodimers.

The protein resides in the cell membrane. The protein is CASP-like protein 1B2 of Populus trichocarpa (Western balsam poplar).